Here is a 279-residue protein sequence, read N- to C-terminus: Eukaryotic translation initiation factor 3 subunit G (279 aa).

3 disordered regions span residues 1-26, 66-115, and 152-171; these read MSTG…IANP, RKNW…KAHE, and TPSG…AAGA. Phosphoserine is present on S78. The segment covering 102-115 has biased composition (basic and acidic residues); sequence KQDEKKEEEDKAHE. The segment covering 152-163 has biased composition (low complexity); that stretch reads TPSGTTPEPTSE. The region spanning 197-276 is the RRM domain; the sequence is TTLKVSQLNS…LILHLEWSKK (80 aa).

This sequence belongs to the eIF-3 subunit G family. As to quaternary structure, component of the eukaryotic translation initiation factor 3 (eIF-3) complex.

The protein localises to the cytoplasm. Functionally, RNA-binding component of the eukaryotic translation initiation factor 3 (eIF-3) complex, which is involved in protein synthesis of a specialized repertoire of mRNAs and, together with other initiation factors, stimulates binding of mRNA and methionyl-tRNAi to the 40S ribosome. The eIF-3 complex specifically targets and initiates translation of a subset of mRNAs involved in cell proliferation. This subunit can bind 18S rRNA. The polypeptide is Eukaryotic translation initiation factor 3 subunit G (Candida albicans (strain SC5314 / ATCC MYA-2876) (Yeast)).